The chain runs to 405 residues: Argininosuccinate synthase (405 aa).

Position 8–16 (8–16 (AYSGGLDTS)) interacts with ATP. L-citrulline contacts are provided by Tyr86 and Ser91. Gly116 is an ATP binding site. Residues Thr118, Asn122, and Asp123 each contribute to the L-aspartate site. Asn122 provides a ligand contact to L-citrulline. L-citrulline contacts are provided by Arg126, Ser175, Ser184, Glu260, and Tyr272.

This sequence belongs to the argininosuccinate synthase family. Type 1 subfamily. As to quaternary structure, homotetramer.

Its subcellular location is the cytoplasm. The enzyme catalyses L-citrulline + L-aspartate + ATP = 2-(N(omega)-L-arginino)succinate + AMP + diphosphate + H(+). Its pathway is amino-acid biosynthesis; L-arginine biosynthesis; L-arginine from L-ornithine and carbamoyl phosphate: step 2/3. The chain is Argininosuccinate synthase from Koribacter versatilis (strain Ellin345).